The following is a 412-amino-acid chain: Na(+)-translocating NADH-quinone reductase subunit B (412 aa).

The next 3 helical transmembrane spans lie at 57-77 (MILV…NVGL), 127-147 (VFFL…EVLF), and 163-183 (SILF…ALGI). At threonine 236 the chain carries FMN phosphoryl threonine. The next 5 helical transmembrane spans lie at 270 to 290 (GSIG…ILFG), 297 to 317 (IVAG…VIGS), 322 to 342 (MFSM…GMMF), 358 to 378 (WSYG…NPAY), and 381 to 401 (GMML…YLVV).

This sequence belongs to the NqrB/RnfD family. Composed of six subunits; NqrA, NqrB, NqrC, NqrD, NqrE and NqrF. It depends on FMN as a cofactor.

It is found in the cell inner membrane. It carries out the reaction a ubiquinone + n Na(+)(in) + NADH + H(+) = a ubiquinol + n Na(+)(out) + NAD(+). Its function is as follows. NQR complex catalyzes the reduction of ubiquinone-1 to ubiquinol by two successive reactions, coupled with the transport of Na(+) ions from the cytoplasm to the periplasm. NqrA to NqrE are probably involved in the second step, the conversion of ubisemiquinone to ubiquinol. The polypeptide is Na(+)-translocating NADH-quinone reductase subunit B (Klebsiella pneumoniae (strain 342)).